A 119-amino-acid chain; its full sequence is Protein yippee-like 3 (119 aa).

Positions 19-116 (RRYSCVHCRA…IELSHMIKDN (98 aa)) constitute a Yippee domain. Zn(2+)-binding residues include cysteine 23, cysteine 26, cysteine 79, and cysteine 82.

Belongs to the yippee family.

The protein localises to the nucleus. It is found in the nucleolus. Functionally, may be involved in proliferation and apoptosis in myeloid precursor cells. The protein is Protein yippee-like 3 (ypel3) of Oryzias latipes (Japanese rice fish).